We begin with the raw amino-acid sequence, 352 residues long: Endophilin-A1 (352 aa).

Residues 1-21 (MSVAGLKKQFHKATQKVSEKV) form a membrane-binding amphipathic helix region. A disordered region spans residues 1–27 (MSVAGLKKQFHKATQKVSEKVGGAEGT). The interval 1 to 125 (MSVAGLKKQF…EVGEAMRELS (125 aa)) is binds and tubulates liposomes. The 232-residue stretch at 18-249 (SEKVGGAEGT…LEERIRQASS (232 aa)) folds into the BAR domain. Positions 60-87 (PNPASRAKLSMINTMSKIRGQEKGPGYP) are required for dimerization upon membrane association. Positions 181–248 (EELRQALEKF…RLEERIRQAS (68 aa)) form a coiled coil. Residues 245–257 (RQASSQPRREYQP) are compositionally biased toward basic and acidic residues. Residues 245–289 (RQASSQPRREYQPKPRMSLEFPTGDSTQPNGGLSHTGTPKPSGVQ) are disordered. Serine 262 carries the phosphoserine modification. Residues 268-283 (GDSTQPNGGLSHTGTP) show a composition bias toward polar residues. An SH3 domain is found at 290 to 349 (MDQPCCRALYDFEPENEGELGFKEGDIITLTNQIDENWYEGMLHGHSGFFPINYVEILVA). At tyrosine 299 the chain carries Phosphotyrosine.

Belongs to the endophilin family. As to quaternary structure, monomer; in cytoplasm. Homodimer; when associated with membranes. Interacts with OPHN1. Interacts with SYNJ1. Interacts with DNM1. Interacts with MAP4K3; the interaction appears to regulate MAP4K3-mediated JNK activation. Interacts with PDCD6IP. Interacts with ATXN2. Interacts with ADAM9 and ADAM15 cytoplasmic tails. Interacts with BIN2. Interacts with TMEM108. Interacts with ADGRB2. In terms of tissue distribution, brain, mostly in frontal cortex. Expressed at high level in fetal cerebellum.

It is found in the cytoplasm. The protein resides in the membrane. The protein localises to the early endosome. It localises to the presynapse. Its function is as follows. Implicated in synaptic vesicle endocytosis. May recruit other proteins to membranes with high curvature. Required for BDNF-dependent dendrite outgrowth. Cooperates with SH3GL2 to mediate BDNF-NTRK2 early endocytic trafficking and signaling from early endosomes. The protein is Endophilin-A1 (SH3GL2) of Homo sapiens (Human).